Consider the following 127-residue polypeptide: Glycine cleavage system H protein (127 aa).

The region spanning 22–104 is the Lipoyl-binding domain; sequence EVVIGITHFA…YEGAWMVKVE (83 aa). An N6-lipoyllysine modification is found at Lys63.

It belongs to the GcvH family. As to quaternary structure, the glycine cleavage system is composed of four proteins: P, T, L and H. It depends on (R)-lipoate as a cofactor.

The glycine cleavage system catalyzes the degradation of glycine. The H protein shuttles the methylamine group of glycine from the P protein to the T protein. In terms of biological role, is also involved in protein lipoylation via its role as an octanoyl/lipoyl carrier protein intermediate. This Bacillus cereus (strain G9842) protein is Glycine cleavage system H protein.